The following is a 104-amino-acid chain: MLETLYQEALKRKKEPKEGSYTSYLYDKGLDKILKKVGEEATEVVIAAKNADKNEMANETADLLYHLAVALVETGVSLEEVETVLQARQGKQSRIHDRPEIDHY.

This sequence belongs to the PRA-PH family.

It is found in the cytoplasm. The catalysed reaction is 1-(5-phospho-beta-D-ribosyl)-ATP + H2O = 1-(5-phospho-beta-D-ribosyl)-5'-AMP + diphosphate + H(+). Its pathway is amino-acid biosynthesis; L-histidine biosynthesis; L-histidine from 5-phospho-alpha-D-ribose 1-diphosphate: step 2/9. This Streptococcus sanguinis (strain SK36) protein is Phosphoribosyl-ATP pyrophosphatase.